A 459-amino-acid polypeptide reads, in one-letter code: Bifunctional protein GlmU (459 aa).

Positions 1 to 229 are pyrophosphorylase; it reads MTNYAIILAA…FDESLGVNDR (229 aa). Residues 8–11, Lys-22, Gln-72, and 77–78 each bind UDP-N-acetyl-alpha-D-glucosamine; these read LAAG and GT. Mg(2+) is bound at residue Asp-102. Gly-139, Glu-154, Asn-169, and Asn-227 together coordinate UDP-N-acetyl-alpha-D-glucosamine. Residue Asn-227 participates in Mg(2+) binding. Residues 230 to 250 are linker; sequence VALATAESVMRRRINQQHMVN. The interval 251-459 is N-acetyltransferase; that stretch reads GVSFVNPHAT…KRLPHHPQNK (209 aa). UDP-N-acetyl-alpha-D-glucosamine is bound by residues Arg-332 and Lys-350. The active-site Proton acceptor is His-362. Positions 365 and 376 each coordinate UDP-N-acetyl-alpha-D-glucosamine. Acetyl-CoA contacts are provided by residues Ala-379, 385 to 386, Ser-404, Ala-422, and Arg-439; that span reads NY.

This sequence in the N-terminal section; belongs to the N-acetylglucosamine-1-phosphate uridyltransferase family. It in the C-terminal section; belongs to the transferase hexapeptide repeat family. As to quaternary structure, homotrimer. Requires Mg(2+) as cofactor.

Its subcellular location is the cytoplasm. The catalysed reaction is alpha-D-glucosamine 1-phosphate + acetyl-CoA = N-acetyl-alpha-D-glucosamine 1-phosphate + CoA + H(+). It carries out the reaction N-acetyl-alpha-D-glucosamine 1-phosphate + UTP + H(+) = UDP-N-acetyl-alpha-D-glucosamine + diphosphate. The protein operates within nucleotide-sugar biosynthesis; UDP-N-acetyl-alpha-D-glucosamine biosynthesis; N-acetyl-alpha-D-glucosamine 1-phosphate from alpha-D-glucosamine 6-phosphate (route II): step 2/2. Its pathway is nucleotide-sugar biosynthesis; UDP-N-acetyl-alpha-D-glucosamine biosynthesis; UDP-N-acetyl-alpha-D-glucosamine from N-acetyl-alpha-D-glucosamine 1-phosphate: step 1/1. It functions in the pathway bacterial outer membrane biogenesis; LPS lipid A biosynthesis. Functionally, catalyzes the last two sequential reactions in the de novo biosynthetic pathway for UDP-N-acetylglucosamine (UDP-GlcNAc). The C-terminal domain catalyzes the transfer of acetyl group from acetyl coenzyme A to glucosamine-1-phosphate (GlcN-1-P) to produce N-acetylglucosamine-1-phosphate (GlcNAc-1-P), which is converted into UDP-GlcNAc by the transfer of uridine 5-monophosphate (from uridine 5-triphosphate), a reaction catalyzed by the N-terminal domain. The sequence is that of Bifunctional protein GlmU from Streptococcus sanguinis (strain SK36).